Here is a 225-residue protein sequence, read N- to C-terminus: Phosphoribosylformylglycinamidine synthase subunit PurQ (225 aa).

Positions 5 to 225 (SAVITFPGSN…ESVVRGLVEA (221 aa)) constitute a Glutamine amidotransferase type-1 domain. Cys89 serves as the catalytic Nucleophile. Residues His197 and Glu199 contribute to the active site.

As to quaternary structure, part of the FGAM synthase complex composed of 1 PurL, 1 PurQ and 2 PurS subunits.

It is found in the cytoplasm. It catalyses the reaction N(2)-formyl-N(1)-(5-phospho-beta-D-ribosyl)glycinamide + L-glutamine + ATP + H2O = 2-formamido-N(1)-(5-O-phospho-beta-D-ribosyl)acetamidine + L-glutamate + ADP + phosphate + H(+). The catalysed reaction is L-glutamine + H2O = L-glutamate + NH4(+). It functions in the pathway purine metabolism; IMP biosynthesis via de novo pathway; 5-amino-1-(5-phospho-D-ribosyl)imidazole from N(2)-formyl-N(1)-(5-phospho-D-ribosyl)glycinamide: step 1/2. Part of the phosphoribosylformylglycinamidine synthase complex involved in the purines biosynthetic pathway. Catalyzes the ATP-dependent conversion of formylglycinamide ribonucleotide (FGAR) and glutamine to yield formylglycinamidine ribonucleotide (FGAM) and glutamate. The FGAM synthase complex is composed of three subunits. PurQ produces an ammonia molecule by converting glutamine to glutamate. PurL transfers the ammonia molecule to FGAR to form FGAM in an ATP-dependent manner. PurS interacts with PurQ and PurL and is thought to assist in the transfer of the ammonia molecule from PurQ to PurL. In Novosphingobium aromaticivorans (strain ATCC 700278 / DSM 12444 / CCUG 56034 / CIP 105152 / NBRC 16084 / F199), this protein is Phosphoribosylformylglycinamidine synthase subunit PurQ.